The primary structure comprises 151 residues: Small ribosomal subunit protein uS15 (151 aa).

Serine 32 carries the post-translational modification Phosphoserine. Residues lysine 39 and lysine 43 each participate in a glycyl lysine isopeptide (Lys-Gly) (interchain with G-Cter in ubiquitin) cross-link.

The protein belongs to the universal ribosomal protein uS15 family. As to quaternary structure, component of the small ribosomal subunit (SSU). Mature yeast ribosomes consist of a small (40S) and a large (60S) subunit. The 40S small subunit contains 1 molecule of ribosomal RNA (18S rRNA) and 33 different proteins (encoded by 57 genes). The large 60S subunit contains 3 rRNA molecules (25S, 5.8S and 5S rRNA) and 46 different proteins (encoded by 81 genes).

Its subcellular location is the cytoplasm. Its function is as follows. Component of the ribosome, a large ribonucleoprotein complex responsible for the synthesis of proteins in the cell. The small ribosomal subunit (SSU) binds messenger RNAs (mRNAs) and translates the encoded message by selecting cognate aminoacyl-transfer RNA (tRNA) molecules. The large subunit (LSU) contains the ribosomal catalytic site termed the peptidyl transferase center (PTC), which catalyzes the formation of peptide bonds, thereby polymerizing the amino acids delivered by tRNAs into a polypeptide chain. The nascent polypeptides leave the ribosome through a tunnel in the LSU and interact with protein factors that function in enzymatic processing, targeting, and the membrane insertion of nascent chains at the exit of the ribosomal tunnel. The polypeptide is Small ribosomal subunit protein uS15 (Saccharomyces cerevisiae (strain ATCC 204508 / S288c) (Baker's yeast)).